We begin with the raw amino-acid sequence, 415 residues long: Serine--tRNA ligase (415 aa).

Residue 231 to 233 coordinates L-serine; sequence TAE. Residue 262–264 participates in ATP binding; it reads RSE. Glu-285 is a binding site for L-serine. 349–352 contributes to the ATP binding site; the sequence is EISS. Residue Ser-383 coordinates L-serine.

This sequence belongs to the class-II aminoacyl-tRNA synthetase family. Type-1 seryl-tRNA synthetase subfamily. In terms of assembly, homodimer. The tRNA molecule binds across the dimer.

The protein resides in the cytoplasm. It carries out the reaction tRNA(Ser) + L-serine + ATP = L-seryl-tRNA(Ser) + AMP + diphosphate + H(+). It catalyses the reaction tRNA(Sec) + L-serine + ATP = L-seryl-tRNA(Sec) + AMP + diphosphate + H(+). The protein operates within aminoacyl-tRNA biosynthesis; selenocysteinyl-tRNA(Sec) biosynthesis; L-seryl-tRNA(Sec) from L-serine and tRNA(Sec): step 1/1. Functionally, catalyzes the attachment of serine to tRNA(Ser). Is also able to aminoacylate tRNA(Sec) with serine, to form the misacylated tRNA L-seryl-tRNA(Sec), which will be further converted into selenocysteinyl-tRNA(Sec). The protein is Serine--tRNA ligase of Helicobacter pylori (strain P12).